We begin with the raw amino-acid sequence, 319 residues long: MSSPQAPEDGQGCGDRGDPPGDLRSVLVTTVLNLEPLDEDLFRGRHYWVPAKRLFGGQIVGQALVAAAKSVSEDVHVHSLHCYFVRAGDPKLPVLYQVERTRTGSSFSVRSVKAVQHGKPIFICQASFQQAQPSPMQHQFSMPTVPPPEELLDCETLIDQYLRDPNLQKRYPLALNRIAAQEVPIEIKPVNPSPLSQLQRMEPKQMFWVRARGYIGEGDMKMHCCVAAYISDYAFLGTALLPHQWQHKVHFMVSLDHSMWFHAPFRADHWMLYECESPWAGGSRGLVHGRLWRQDGVLAVTCAQEGVIRVKPQVSESKL.

The disordered stretch occupies residues 1–20 (MSSPQAPEDGQGCGDRGDPP). Residues aspartate 232, serine 254, and glutamine 304 each act as charge relay system in the active site. Positions 317-319 (SKL) match the Microbody targeting signal motif.

The protein belongs to the C/M/P thioester hydrolase family. As to quaternary structure, homodimer. In terms of assembly, (Microbial infection) Interacts with human immunodeficiency virus (HIV-1) Nef (via middle region); this interaction enhances ACOT8 Acyl-CoA thioesterase activity and occurs in a Nef myristoylation-independent manner. According to a second report, the interaction with HIV-1 Nef occurs in a Nef myristoylation-independent manner but does not enhance ACOT8 Acyl-CoA thioesterase activity. In terms of tissue distribution, detected in a T-cell line (at protein level). Ubiquitous.

Its subcellular location is the peroxisome matrix. It carries out the reaction choloyl-CoA + H2O = cholate + CoA + H(+). It catalyses the reaction chenodeoxycholoyl-CoA + H2O = chenodeoxycholate + CoA + H(+). The enzyme catalyses acetyl-CoA + H2O = acetate + CoA + H(+). The catalysed reaction is butanoyl-CoA + H2O = butanoate + CoA + H(+). It carries out the reaction 2-methylpropanoyl-CoA + H2O = 2-methylpropanoate + CoA + H(+). It catalyses the reaction hexanoyl-CoA + H2O = hexanoate + CoA + H(+). The enzyme catalyses octanoyl-CoA + H2O = octanoate + CoA + H(+). The catalysed reaction is decanoyl-CoA + H2O = decanoate + CoA + H(+). It carries out the reaction dodecanoyl-CoA + H2O = dodecanoate + CoA + H(+). It catalyses the reaction tetradecanoyl-CoA + H2O = tetradecanoate + CoA + H(+). The enzyme catalyses hexadecanoyl-CoA + H2O = hexadecanoate + CoA + H(+). The catalysed reaction is octadecanoyl-CoA + H2O = octadecanoate + CoA + H(+). It carries out the reaction malonyl-CoA + H2O = malonate + CoA + H(+). It catalyses the reaction acetoacetyl-CoA + H2O = acetoacetate + CoA + H(+). The enzyme catalyses propanoyl-CoA + H2O = propanoate + CoA + H(+). The catalysed reaction is succinyl-CoA + H2O = succinate + CoA + H(+). It carries out the reaction glutaryl-CoA + H2O = glutarate + CoA + H(+). It catalyses the reaction hexanedioyl-CoA + H2O = hexanedioate + CoA + H(+). The enzyme catalyses octanedioyl-CoA + H2O = octanedioate + CoA + H(+). The catalysed reaction is decanedioyl-CoA + H2O = decanedioate + CoA + H(+). It carries out the reaction dodecanedioyl-CoA + H2O = dodecanedioate + CoA + H(+). It catalyses the reaction (9Z)-tetradecenoyl-CoA + H2O = (9Z)-tetradecenoate + CoA + H(+). The enzyme catalyses (9Z)-hexadecenoyl-CoA + H2O = (9Z)-hexadecenoate + CoA + H(+). The catalysed reaction is (9Z)-octadecenoyl-CoA + H2O = (9Z)-octadecenoate + CoA + H(+). It carries out the reaction (9Z,12Z)-octadecadienoyl-CoA + H2O = (9Z,12Z)-octadecadienoate + CoA + H(+). It catalyses the reaction eicosanoyl-CoA + H2O = eicosanoate + CoA + H(+). The enzyme catalyses (5Z,8Z,11Z,14Z)-eicosatetraenoyl-CoA + H2O = (5Z,8Z,11Z,14Z)-eicosatetraenoate + CoA + H(+). The catalysed reaction is 4,8-dimethylnonanoyl-CoA + H2O = 4,8-dimethylnonanoate + CoA + H(+). It carries out the reaction 2,6-dimethylheptanoyl-CoA + H2O = 2,6-dimethylheptanoate + CoA + H(+). It catalyses the reaction (3S)-3-hydroxy-3-methylglutaryl-CoA + H2O = 3-hydroxy-3-methylglutarate + CoA + H(+). The enzyme catalyses 3alpha,7alpha,12alpha-trihydroxy-5beta-cholestan-26-oyl-CoA + H2O = 3alpha,7alpha,12alpha-trihydroxy-5beta-cholestan-26-oate + CoA + H(+). The catalysed reaction is 2-methyloctadecanoyl-CoA + H2O = 2-methyloctadecanoate + CoA + H(+). It carries out the reaction prostaglandin F2alpha-CoA + H2O = prostaglandin F2alpha + CoA + H(+). Its pathway is lipid metabolism; fatty acid metabolism. With respect to regulation, inhibited by CoASH (IC(50)=10-15 uM). Also inhibited by cysteine-reactive agents. Its function is as follows. Catalyzes the hydrolysis of acyl-CoAs into free fatty acids and coenzyme A (CoASH), regulating their respective intracellular levels. Displays no strong substrate specificity with respect to the carboxylic acid moiety of Acyl-CoAs. Hydrolyzes medium length (C2 to C20) straight-chain, saturated and unsaturated acyl-CoAS but is inactive towards substrates with longer aliphatic chains. Moreover, it catalyzes the hydrolysis of CoA esters of bile acids, such as choloyl-CoA and chenodeoxycholoyl-CoA and competes with bile acid CoA:amino acid N-acyltransferase (BAAT). Is also able to hydrolyze CoA esters of dicarboxylic acids. It is involved in the metabolic regulation of peroxisome proliferation. In terms of biological role, (Microbial infection) May mediate Nef-induced down-regulation of CD4 cell-surface expression. The protein is Acyl-coenzyme A thioesterase 8 (ACOT8) of Homo sapiens (Human).